The chain runs to 569 residues: Urease subunit alpha (569 aa).

In terms of domain architecture, Urease spans 131–569 (GGIDTHIHFI…LPMAQRYFLL (439 aa)). Positions 136, 138, and 219 each coordinate Ni(2+). Lys-219 carries the post-translational modification N6-carboxylysine. His-221 provides a ligand contact to substrate. His-248 and His-274 together coordinate Ni(2+). His-322 functions as the Proton donor in the catalytic mechanism. Asp-362 contacts Ni(2+).

It belongs to the metallo-dependent hydrolases superfamily. Urease alpha subunit family. Heterotrimer of UreA (gamma), UreB (beta) and UreC (alpha) subunits. Three heterotrimers associate to form the active enzyme. It depends on Ni cation as a cofactor. Carboxylation allows a single lysine to coordinate two nickel ions.

It is found in the cytoplasm. The catalysed reaction is urea + 2 H2O + H(+) = hydrogencarbonate + 2 NH4(+). Its pathway is nitrogen metabolism; urea degradation; CO(2) and NH(3) from urea (urease route): step 1/1. In Synechococcus sp. (strain RCC307), this protein is Urease subunit alpha.